The following is a 310-amino-acid chain: Putrescinyltransferase (310 aa).

The protein belongs to the thymidine aminotransferase family.

It carries out the reaction 5-phosphomethyl-dUMP in DNA + putrescine = 5-N(alpha)-putrescinyl-dTMP in DNA + phosphate. Its function is as follows. Transfers putrescine to 5-phosphomethyl-2'-deoxyuridine (5-PmdU) to produce 5-Nalpha-putrescinylthymidine (Nalpha-PutT) as a step in the pathway leading to thymidine hypermodifications in the viral genome. As a final result of the pathway of hypermodification, Nalpha-PutT substitutes for about 50% of thymidines in the viral DNA. These modifications probably prevent degradation of viral genome by the host restriction-modification antiviral defense system. The sequence is that of Putrescinyltransferase from Delftia phage PhiW-14 (Deftia acidovorans bacteriophage phiW-14).